The following is a 61-amino-acid chain: Metallothionein-2 (61 aa).

Methionine 1 bears the N-acetylmethionine mark. The interval 1–29 (MDPNCSCTAGESCTCAGSCKCKDCKCASC) is beta. 18 residues coordinate a divalent metal cation: cysteine 5, cysteine 7, cysteine 13, cysteine 15, cysteine 19, cysteine 21, cysteine 24, cysteine 26, cysteine 29, cysteine 33, cysteine 34, cysteine 36, cysteine 37, cysteine 41, cysteine 44, cysteine 48, cysteine 50, and cysteine 57. The interval 30 to 61 (KKSCCSCCPVGCAKCAQGCVCKGASDKCSCCA) is alpha. Position 58 is a phosphoserine (serine 58). Positions 59 and 60 each coordinate a divalent metal cation.

The protein belongs to the metallothionein superfamily. Type 1 family. In terms of assembly, interacts with EOLA1.

Metallothioneins have a high content of cysteine residues that bind various heavy metals; these proteins are transcriptionally regulated by both heavy metals and glucocorticoids. The sequence is that of Metallothionein-2 (MT2A) from Ovis aries (Sheep).